The primary structure comprises 179 residues: MEESATVEVVVGRVGRAHGLRGDVVVEVRTDEPDARFGVGATVQIEGSRRDLTVVRSRWAKGCLIVAFDEVKDRQGAEELRGSVLVVDVEPNDDPDDPDEFWDRRLRGLTVVDESGKSRGAVKDVLHMPAQDVLVIDVSGEEHLVPFVHQLVPTVDVASGRIVVSGIPGLLDSNAEEAR.

One can recognise a PRC barrel domain in the interval 98–170; sequence PDEFWDRRLR…RIVVSGIPGL (73 aa).

Belongs to the RimM family. Binds ribosomal protein uS19.

It is found in the cytoplasm. In terms of biological role, an accessory protein needed during the final step in the assembly of 30S ribosomal subunit, possibly for assembly of the head region. Essential for efficient processing of 16S rRNA. May be needed both before and after RbfA during the maturation of 16S rRNA. It has affinity for free ribosomal 30S subunits but not for 70S ribosomes. The sequence is that of Ribosome maturation factor RimM from Cutibacterium acnes (strain DSM 16379 / KPA171202) (Propionibacterium acnes).